A 141-amino-acid polypeptide reads, in one-letter code: Organic hydroperoxide resistance protein-like 1 (141 aa).

Residues 1–20 (MAVNYETKATNTGGRNGHVQ) form a disordered region.

It belongs to the OsmC/Ohr family.

The protein is Organic hydroperoxide resistance protein-like 1 of Staphylococcus saprophyticus subsp. saprophyticus (strain ATCC 15305 / DSM 20229 / NCIMB 8711 / NCTC 7292 / S-41).